The following is a 251-amino-acid chain: Probable transcriptional regulatory protein PMI1113 (251 aa).

Belongs to the TACO1 family.

The protein resides in the cytoplasm. This is Probable transcriptional regulatory protein PMI1113 from Proteus mirabilis (strain HI4320).